The sequence spans 354 residues: Arginase-2, mitochondrial (354 aa).

A mitochondrion-targeting transit peptide spans 1 to 22 (MFLRSSASRLLHGQIPCVLTRS). 4 residues coordinate Mn(2+): histidine 120, aspartate 143, histidine 145, and aspartate 147. Substrate-binding positions include 145–149 (HADIN), 156–158 (SGN), and glutamate 202. Mn(2+)-binding residues include aspartate 251 and aspartate 253. Substrate contacts are provided by threonine 265 and glutamate 296.

The protein belongs to the arginase family. In terms of assembly, homotrimer. Mn(2+) is required as a cofactor.

It localises to the mitochondrion. The enzyme catalyses L-arginine + H2O = urea + L-ornithine. Its pathway is nitrogen metabolism; urea cycle; L-ornithine and urea from L-arginine: step 1/1. Functionally, may play a role in the regulation of extra-urea cycle arginine metabolism and also in down-regulation of nitric oxide synthesis. Extrahepatic arginase functions to regulate L-arginine bioavailability to nitric oxid synthase (NOS). Arginine metabolism is a critical regulator of innate and adaptive immune responses. Seems to be involved in negative regulation of the survival capacity of activated CD4(+) and CD8(+) T cells. May suppress inflammation-related signaling in asthmatic airway epithelium. May contribute to the immune evasion of H.pylori by restricting M1 macrophage activation and polyamine metabolism. May play a role in promoting prenatal immune suppression. Regulates RPS6KB1 signaling, which promotes endothelial cell senescence and inflammation and implicates NOS3/eNOS dysfunction. Can inhibit endothelial autophagy independently of its enzymatic activity implicating mTORC2 signaling. Involved in vascular smooth muscle cell senescence and apoptosis independently of its enzymatic activity. This is Arginase-2, mitochondrial (Arg2) from Mus musculus (Mouse).